Here is a 162-residue protein sequence, read N- to C-terminus: Phosphopantetheine adenylyltransferase (162 aa).

Position 11 (Ser-11) interacts with substrate. ATP-binding positions include 11–12 (SF) and His-19. Residues Lys-43, Val-76, and Arg-90 each coordinate substrate. ATP is bound by residues 91–93 (GLR), Glu-101, and 126–132 (HLYISSS).

The protein belongs to the bacterial CoaD family. Homohexamer. Requires Mg(2+) as cofactor.

The protein localises to the cytoplasm. It catalyses the reaction (R)-4'-phosphopantetheine + ATP + H(+) = 3'-dephospho-CoA + diphosphate. The protein operates within cofactor biosynthesis; coenzyme A biosynthesis; CoA from (R)-pantothenate: step 4/5. Its function is as follows. Reversibly transfers an adenylyl group from ATP to 4'-phosphopantetheine, yielding dephospho-CoA (dPCoA) and pyrophosphate. This chain is Phosphopantetheine adenylyltransferase, found in Streptococcus pneumoniae (strain Hungary19A-6).